Consider the following 499-residue polypeptide: MTATASALRMRGISKIFPGVKALSNVNFTVEYGRIHAVVGENGAGKSTLMKILSGSYAPTTGTTEIAGVEVQMRRPADAQKLGIRMVHQELNLVPDLTVAENIYLGRMPHRRFLVDRQAMLRKAAAVLKELEAAIDPKARLGDLPISQQQLVEIAKSYSADPRIIVLDEPTSSLSEHETTALFSILRKMKSQGIAIIYISHRLKEVLDIADDVTILRDGSMIDTRPAAGITAAEMIRLMVGREVANVFPKTPSKIGPVAFKVTGLSDGEKFHDVGFDVRSGEILGLTGLVGAGRTEVAQAIFGLAPLATGRIEINGKAVTIGSPAAAVKAGVAYVPEDRKGDGIVPSMSVRENISLPVLRRLSRLGRIGMSRDRGLAAKYTRDFSIVPPDPERRINLLSGGNQQKAIISRWLAAGPKVLILDEPTRGVDVGAKAEIHRIIGELVAGGMAVVMISSELPEVMGVCDRVVVMRDGRASSPIARGDLTEERIMALATGEEPA.

ABC transporter domains are found at residues 8–243 and 253–497; these read LRMR…VGRE and SKIG…TGEE. 40–47 serves as a coordination point for ATP; that stretch reads GENGAGKS.

The protein belongs to the ABC transporter superfamily. Carbohydrate importer 2 (CUT2) (TC 3.A.1.2) family.

It localises to the cell inner membrane. It catalyses the reaction D-ribose(out) + ATP + H2O = D-ribose(in) + ADP + phosphate + H(+). The catalysed reaction is D-galactose(out) + ATP + H2O = D-galactose(in) + ADP + phosphate + H(+). Part of an ABC transporter complex involved in carbohydrate import. Could be involved in ribose, galactose and/or methyl galactoside import. Responsible for energy coupling to the transport system. The protein is Putative ribose/galactose/methyl galactoside import ATP-binding protein 3 of Agrobacterium fabrum (strain C58 / ATCC 33970) (Agrobacterium tumefaciens (strain C58)).